The following is a 273-amino-acid chain: DNA repair protein RecO (273 aa).

Residues Gly249–Arg273 form a disordered region. Residues Leu252–Arg273 show a composition bias toward basic and acidic residues.

The protein belongs to the RecO family.

In terms of biological role, involved in DNA repair and RecF pathway recombination. The sequence is that of DNA repair protein RecO from Heliobacterium modesticaldum (strain ATCC 51547 / Ice1).